The chain runs to 594 residues: MADLLSSLKNLPNSSGVYQYFDKNRQLLYIGKAKNLKKRIKSYFSICNNEITPNHRASLRIQMMVKQIAFLETILVENEQDALILENSLIKQLKPKYNILLRDDKTYPYIYMDFSTDFPIPLITRKILKQPGVKYFGPFTSGAKDILDSLYELLPLVQKKNCIKDKKACMFYQIERCKAPCEDKITKEEYLKIAKECLEMIENKDRLIKELELKMERLSSNLRFEEALIYRDRIAKIQKIAPFTCMDLAKLYDLDIFAFYGASNKAVLVKMFMRGGKIISSAFEKIHSLNGFDTDEAMKQAIINHYQSHLPLIPEQILLNACSNEALKELQEFISHQYSKKIALSIPKKGDKLALIEIAMKNAQEIFSQEKTSNEDLILEEVRSLFNLECVPYRVEIFDTSHHANSQCVGGMVVYENNEFQKDSYRRYHLKGSNEYAQMSELLTRRALDFAKEPPPNLWVIDGGRAQLNIALEILKSSGSFVEVIAISKEKRDSKAYRSKGGAKDIIHTPSDTFKLLPSDKRLQWVQKLRDESHRYAINFHRSTKLKNMKQIALLKEKGIGEASVKKLLDYFGSFEAIEKASEQEKNAVLKKRI.

A GIY-YIG domain is found at 13-99 (NSSGVYQYFD…IKQLKPKYNI (87 aa)). In terms of domain architecture, UVR spans 205–240 (DRLIKELELKMERLSSNLRFEEALIYRDRIAKIQKI).

The protein belongs to the UvrC family. As to quaternary structure, interacts with UvrB in an incision complex.

It localises to the cytoplasm. Its function is as follows. The UvrABC repair system catalyzes the recognition and processing of DNA lesions. UvrC both incises the 5' and 3' sides of the lesion. The N-terminal half is responsible for the 3' incision and the C-terminal half is responsible for the 5' incision. The chain is UvrABC system protein C from Helicobacter pylori (strain G27).